The primary structure comprises 230 residues: Ion-translocating oxidoreductase complex subunit E (230 aa).

Helical transmembrane passes span 18–38 (ALVQLLGLCPLLAVTSTATNA), 39–59 (LGLGLATTLVLTLTNLTVSAL), 63–83 (TPAEIRIPIYVMIIASVVSAV), 86–106 (LINAYAFGLYQSLGIFIPLIV), 125–145 (WLSALDGFSIGMGATGAMFVL), and 182–202 (PFLLARLPPGAFIGLGLMLAV).

It belongs to the NqrDE/RnfAE family. As to quaternary structure, the complex is composed of six subunits: RsxA, RsxB, RsxC, RsxD, RsxE and RsxG.

Its subcellular location is the cell inner membrane. Its function is as follows. Part of a membrane-bound complex that couples electron transfer with translocation of ions across the membrane. Required to maintain the reduced state of SoxR. This chain is Ion-translocating oxidoreductase complex subunit E, found in Salmonella dublin (strain CT_02021853).